A 361-amino-acid chain; its full sequence is Chorismate synthase (361 aa).

Positions 48 and 54 each coordinate NADP(+). FMN contacts are provided by residues 125 to 127, 238 to 239, glycine 278, 293 to 297, and arginine 319; these read RSS, NA, and KPTSS.

This sequence belongs to the chorismate synthase family. In terms of assembly, homotetramer. Requires FMNH2 as cofactor.

It catalyses the reaction 5-O-(1-carboxyvinyl)-3-phosphoshikimate = chorismate + phosphate. Its pathway is metabolic intermediate biosynthesis; chorismate biosynthesis; chorismate from D-erythrose 4-phosphate and phosphoenolpyruvate: step 7/7. Catalyzes the anti-1,4-elimination of the C-3 phosphate and the C-6 proR hydrogen from 5-enolpyruvylshikimate-3-phosphate (EPSP) to yield chorismate, which is the branch point compound that serves as the starting substrate for the three terminal pathways of aromatic amino acid biosynthesis. This reaction introduces a second double bond into the aromatic ring system. The chain is Chorismate synthase from Escherichia coli O7:K1 (strain IAI39 / ExPEC).